Consider the following 481-residue polypeptide: Sucrose phosphorylase (481 aa).

Sucrose contacts are provided by residues Asp49, His87, Arg191–Asp193, Glu234, His291–Asp292, Asp335–Gln338, and Arg392. Asp193 serves as the catalytic Nucleophile. The active-site Proton donor is Glu234.

It belongs to the glycosyl hydrolase 13 family. Sucrose phosphorylase subfamily.

It is found in the cytoplasm. It catalyses the reaction sucrose + phosphate = D-fructose + alpha-D-glucose 1-phosphate. Its function is as follows. Intracellular catabolism of sucrose. Being intracellular, probably not involved in synthesis of extracellular polysaccharides. This Streptococcus mutans serotype c (strain ATCC 700610 / UA159) protein is Sucrose phosphorylase.